A 519-amino-acid chain; its full sequence is Probable WRKY transcription factor 33 (519 aa).

2 disordered regions span residues 1 to 34 and 123 to 212; these read MAASFLTMDNSRTRQNMNGSANWSQQSGRTSTSS and SSGV…CTFP. Residues 7–34 are compositionally biased toward polar residues; that stretch reads TMDNSRTRQNMNGSANWSQQSGRTSTSS. Over residues 130–142 the composition is skewed to low complexity; sequence TTTTTTTTTTTTT. A compositionally biased stretch (polar residues) spans 164-174; that stretch reads TETRPNNQAVS. Over residues 178 to 188 the composition is skewed to basic and acidic residues; the sequence is REQRKGEDGYN. Residues 178 to 242 constitute a DNA-binding region (WRKY 1); it reads REQRKGEDGY…YKGSHNHPKP (65 aa). Zn(2+) contacts are provided by C209, C214, H237, and H239. Disordered regions lie at residues 232–255 and 267–349; these read VYKGSHNHPKPQSTRRSSSSSSTF and NRQA…REPR. Over residues 245 to 254 the composition is skewed to low complexity; that stretch reads TRRSSSSSST. Polar residues predominate over residues 269-299; that stretch reads QASSDQPNSNNSFHQSDSFGMQQEDNTTSDS. A compositionally biased stretch (basic and acidic residues) spans 323 to 332; sequence PEAKRWKGDN. A DNA-binding region (WRKY 2) is located at residues 356-421; that stretch reads SDIDILDDGY…YEGKHNHDVP (66 aa). Zn(2+) contacts are provided by C387, C392, H416, and H418.

The protein belongs to the WRKY group I family. In terms of assembly, interacts with MKS1. Interacts with ATG18A. Interacts with SIB1 and SIB2. Interacts with VQ1 and VQ10. In terms of processing, phosphorylated by MPK4. Phosphorylated on serine residues by MPK3 and MPK6 following infection with the necrotrophic fungal pathogen B.cinerea. Highly expressed in roots, leaves and flowers, and at lower levels in stems, siliques and seeds.

The protein localises to the nucleus. Functionally, transcription factor. Interacts specifically with the W box (5'-TTGAC[CT]-3'), a frequently occurring elicitor-responsive cis-acting element. Involved in defense responses. Required for resistance to the necrotrophic fungal pathogen B.cinerea. Regulates the antagonistic relationship between defense pathways mediating responses to the bacterial pathogen P. syringae and the necrotrophic pathogen B.cinerea. Required for the phytoalexin camalexin synthesis following infection with B.cinerea. Acts as a positive regulator of the camalexin biosynthetic genes PAD3 (CYP71B15) and CYP71A13 by binding to their promoters. Acts downstream of MPK3 and MPK6 in reprogramming the expression of camalexin biosynthetic genes, which drives the metabolic flow to camalexin production. Functions with WRKY25 as positive regulator of salt stress response and abscisic acid (ABA) signaling. Functions with WRKY25 and WRKY26 as positive regulator of plant thermotolerance by partially participating in ethylene-response signal transduction pathway. The DNA-binding activity of WRKY33 is increased by SIB1 and SIB2. This is Probable WRKY transcription factor 33 (WRKY33) from Arabidopsis thaliana (Mouse-ear cress).